Consider the following 383-residue polypeptide: L-aspartate/L-glutamate decarboxylase (383 aa).

Lys232 carries the N6-(pyridoxal phosphate)lysine modification.

This sequence belongs to the group II decarboxylase family. MfnA subfamily. Monomer. Requires pyridoxal 5'-phosphate as cofactor.

It catalyses the reaction L-aspartate + H(+) = beta-alanine + CO2. The catalysed reaction is L-glutamate + H(+) = 4-aminobutanoate + CO2. The enzyme catalyses L-cysteate + H(+) = taurine + CO2. It carries out the reaction 3-sulfino-L-alanine + H(+) = hypotaurine + CO2. It participates in cofactor biosynthesis; coenzyme A biosynthesis. Its function is as follows. Catalyzes the decarboxylation of L-aspartate to produce beta-alanine, and the decarboxylation of L-glutamate to produce 4-aminobutanoate. Can also use cysteate and, to a lesser extent, cysteine sulfite (3-sulfino-L-alanine), but not L-tyrosine. Specific activities toward L-aspartate and cysteate are higher than toward L-glutamate. In Pyrococcus horikoshii (strain ATCC 700860 / DSM 12428 / JCM 9974 / NBRC 100139 / OT-3), this protein is L-aspartate/L-glutamate decarboxylase.